The following is a 75-amino-acid chain: MARYFRRRKFCRFTAEGVTEIDYKDIATLKNYITESGKIVPSRITGTNAKYQRQLARAIKRARYLSLLPYTDLHQ.

It belongs to the bacterial ribosomal protein bS18 family. In terms of assembly, part of the 30S ribosomal subunit. Forms a tight heterodimer with protein bS6.

In terms of biological role, binds as a heterodimer with protein bS6 to the central domain of the 16S rRNA, where it helps stabilize the platform of the 30S subunit. The protein is Small ribosomal subunit protein bS18 of Shewanella loihica (strain ATCC BAA-1088 / PV-4).